The following is a 763-amino-acid chain: Nibrin (763 aa).

The 60-residue stretch at 22-81 folds into the FHA domain; that stretch reads YVVGRKNCAILIPEDQSISRCHATLSVSHPSANLGQTNAASVLSIKDSSKYGTTVNGDKM. BRCT domains lie at 102-179 and 215-324; these read SKYR…CELL and KRKS…NPRR. 3 disordered regions span residues 389–496, 535–593, and 738–763; these read VKET…SSQT, SKAA…SEIE, and QTQQVREESLAEDLFRYNPKPSKRRR. Positions 423–433 are enriched in basic and acidic residues; the sequence is LFREDETDTRK. The span at 434–443 shows a compositional bias: polar residues; that stretch reads NTPSLLPTKS. The Nuclear localization signal signature appears at 469–474; the sequence is AKKRDR. The segment covering 473 to 482 has biased composition (basic and acidic residues); the sequence is DRAEDEKEAS. Basic and acidic residues predominate over residues 742-752; that stretch reads VREESLAEDLF. The FxF/Y motif signature appears at 748-757; it reads AEDLFRYNPK.

It belongs to the Nibrin family. Component of the MRN complex composed of two heterodimers rad50 and mre11 associated with a single nbn.

The protein localises to the nucleus. Its subcellular location is the chromosome. It localises to the PML body. It is found in the telomere. In terms of biological role, component of the MRN complex, which plays a central role in double-strand break (DSB) repair, DNA recombination, maintenance of telomere integrity and meiosis. The MRN complex is involved in the repair of DNA double-strand breaks (DSBs) via homologous recombination (HR), an error-free mechanism which primarily occurs during S and G2 phases. The complex (1) mediates the end resection of damaged DNA, which generates proper single-stranded DNA, a key initial steps in HR, and is (2) required for the recruitment of other repair factors and efficient activation of ATM and ATR upon DNA damage. The MRN complex possesses single-strand endonuclease activity and double-strand-specific 3'-5' exonuclease activity, which are provided by MRE11, to initiate end resection, which is required for single-strand invasion and recombination. Within the MRN complex, nbn acts as a protein-protein adapter, which specifically recognizes and binds phosphorylated proteins, promoting their recruitment to DNA damage sites. Recruits mre11 and rad50 components of the MRN complex to DSBs in response to DNA damage. Promotes the recruitment of PI3/PI4-kinase family members atm, atr, and probably DNA-PKcs to the DNA damage sites, activating their functions. Mediates the recruitment of phosphorylated rbbp8/CtIP to DSBs, leading to cooperation between the MRN complex and rbbp8/CtIP to initiate end resection. The MRN complex promotes recruitment of topbp1 to DNA damage sites. The MRN complex and rbbp8/CtIP are also required for chromosome alignment during metaphase. This is Nibrin from Xenopus laevis (African clawed frog).